Consider the following 276-residue polypeptide: Acyl-[acyl-carrier-protein]--UDP-N-acetylglucosamine O-acyltransferase (276 aa).

It belongs to the transferase hexapeptide repeat family. LpxA subfamily. As to quaternary structure, homotrimer.

Its subcellular location is the cytoplasm. The catalysed reaction is a (3R)-hydroxyacyl-[ACP] + UDP-N-acetyl-alpha-D-glucosamine = a UDP-3-O-[(3R)-3-hydroxyacyl]-N-acetyl-alpha-D-glucosamine + holo-[ACP]. It functions in the pathway glycolipid biosynthesis; lipid IV(A) biosynthesis; lipid IV(A) from (3R)-3-hydroxytetradecanoyl-[acyl-carrier-protein] and UDP-N-acetyl-alpha-D-glucosamine: step 1/6. Involved in the biosynthesis of lipid A, a phosphorylated glycolipid that anchors the lipopolysaccharide to the outer membrane of the cell. This is Acyl-[acyl-carrier-protein]--UDP-N-acetylglucosamine O-acyltransferase from Rippkaea orientalis (strain PCC 8801 / RF-1) (Cyanothece sp. (strain PCC 8801)).